The primary structure comprises 291 residues: Signal peptidase I (291 aa).

The Cytoplasmic segment spans residues 1–45 (MTMKKLTSTTTTLWDNKLFINNLKNFMQTNTESNNNKTTAQEWKS). The chain crosses the membrane as a helical span at residues 46 to 66 (FILVVVIALMIRILIIESFVV). Residues 67–291 (PTGSMKATIL…IFRNLYSIED (225 aa)) lie on the Periplasmic side of the membrane. Catalysis depends on residues Ser-70 and Lys-133.

Belongs to the peptidase S26 family.

The protein localises to the cell inner membrane. It carries out the reaction Cleavage of hydrophobic, N-terminal signal or leader sequences from secreted and periplasmic proteins.. The polypeptide is Signal peptidase I (lepB) (Rickettsia bellii (strain RML369-C)).